The following is a 116-amino-acid chain: Large ribosomal subunit protein bL19 (116 aa).

Belongs to the bacterial ribosomal protein bL19 family.

Its function is as follows. This protein is located at the 30S-50S ribosomal subunit interface and may play a role in the structure and function of the aminoacyl-tRNA binding site. The polypeptide is Large ribosomal subunit protein bL19 (Staphylococcus epidermidis (strain ATCC 35984 / DSM 28319 / BCRC 17069 / CCUG 31568 / BM 3577 / RP62A)).